Reading from the N-terminus, the 276-residue chain is Putative ripening-related protein 5 (276 aa).

The first 18 residues, 1 to 18, serve as a signal peptide directing secretion; it reads MAMIFLLAALSTTHLASS.

This sequence belongs to the kiwellin family.

The protein resides in the secreted. The protein is Putative ripening-related protein 5 of Oryza sativa subsp. japonica (Rice).